The chain runs to 358 residues: Probable protein phosphatase 2C 68 (358 aa).

Residues 74 to 352 (RHGAASVAGR…DNISVVVVDL (279 aa)) form the PPM-type phosphatase domain. Mn(2+)-binding residues include D117, G118, D298, and D343.

Belongs to the PP2C family. Requires Mg(2+) as cofactor. The cofactor is Mn(2+).

It is found in the nucleus. Its subcellular location is the cytoplasm. It localises to the cytosol. It catalyses the reaction O-phospho-L-seryl-[protein] + H2O = L-seryl-[protein] + phosphate. The enzyme catalyses O-phospho-L-threonyl-[protein] + H2O = L-threonyl-[protein] + phosphate. Involved in the regulation of abiotic stress responses. Acts as a negative regulator of abscisic acid (ABA) signaling and positive regulator of abiotic stress signaling. May be involved in panicle development. In Oryza sativa subsp. japonica (Rice), this protein is Probable protein phosphatase 2C 68.